The primary structure comprises 382 residues: D-galactonate dehydratase (382 aa).

Residue D183 participates in Mg(2+) binding. H185 serves as the catalytic Proton donor. Mg(2+) is bound by residues E209 and E235. H285 (proton acceptor) is an active-site residue.

It belongs to the mandelate racemase/muconate lactonizing enzyme family. GalD subfamily. The cofactor is Mg(2+).

The catalysed reaction is D-galactonate = 2-dehydro-3-deoxy-D-galactonate + H2O. The protein operates within carbohydrate acid metabolism; D-galactonate degradation; D-glyceraldehyde 3-phosphate and pyruvate from D-galactonate: step 1/3. In terms of biological role, catalyzes the dehydration of D-galactonate to 2-keto-3-deoxy-D-galactonate. This chain is D-galactonate dehydratase, found in Verminephrobacter eiseniae (strain EF01-2).